Here is a 90-residue protein sequence, read N- to C-terminus: MAVKIRLKRMGAKKSPFYRIVVADSRSPRDGRFIETVGTYNPVAKPAEVKINEELALKWLQTGAKPSDTVRNLFSSQGIMEKFHNAKQGK.

The protein belongs to the bacterial ribosomal protein bS16 family.

This is Small ribosomal subunit protein bS16 from Bacillus velezensis (strain DSM 23117 / BGSC 10A6 / LMG 26770 / FZB42) (Bacillus amyloliquefaciens subsp. plantarum).